Reading from the N-terminus, the 527-residue chain is Probable protein kinase UbiB (527 aa).

The 405-residue stretch at 123 to 527 folds into the Protein kinase domain; it reads EFNETALASA…AIWLLIYLLS (405 aa). Residues 129–137 and K161 contribute to the ATP site; that span reads LASASIAQV. The active-site Proton acceptor is the D296. A helical transmembrane segment spans residues 506–526; it reads FTSFILGLCTGLAIWLLIYLL.

It belongs to the ABC1 family. UbiB subfamily.

The protein resides in the cell inner membrane. It participates in cofactor biosynthesis; ubiquinone biosynthesis [regulation]. In terms of biological role, is probably a protein kinase regulator of UbiI activity which is involved in aerobic coenzyme Q (ubiquinone) biosynthesis. In Pasteurella multocida (strain Pm70), this protein is Probable protein kinase UbiB.